The following is a 346-amino-acid chain: Methylthioribose-1-phosphate isomerase (346 aa).

Substrate-binding positions include 54–56 (RGA), Arg91, and Gln192. Asp233 serves as the catalytic Proton donor. 243–244 (NK) serves as a coordination point for substrate.

It belongs to the eIF-2B alpha/beta/delta subunits family. MtnA subfamily.

It carries out the reaction 5-(methylsulfanyl)-alpha-D-ribose 1-phosphate = 5-(methylsulfanyl)-D-ribulose 1-phosphate. The protein operates within amino-acid biosynthesis; L-methionine biosynthesis via salvage pathway; L-methionine from S-methyl-5-thio-alpha-D-ribose 1-phosphate: step 1/6. Functionally, catalyzes the interconversion of methylthioribose-1-phosphate (MTR-1-P) into methylthioribulose-1-phosphate (MTRu-1-P). The chain is Methylthioribose-1-phosphate isomerase from Yersinia enterocolitica serotype O:8 / biotype 1B (strain NCTC 13174 / 8081).